Here is a 177-residue protein sequence, read N- to C-terminus: Arginine metabolism regulation protein I (177 aa).

The segment covering 1–12 (MTSNSDGSSTSP) has biased composition (polar residues). 2 disordered regions span residues 1-82 (MTSN…TRRK) and 157-177 (NASD…SPAN). Acidic residues predominate over residues 40-53 (QDQEGDFDEEDDDD). Low complexity predominate over residues 56–67 (SVSTSTPTPTIT). An MADS-box domain is found at 80–134 (RRKQPIRYIENKTRRHVTFSKRRHGIMKKAYELSVLTGANILLLILANSGLVYTF). A compositionally biased stretch (polar residues) spans 158 to 177 (ASDTPDATDTSPAQEQSPAN).

As to quaternary structure, interacts with ARG81 and ARG82.

It is found in the nucleus. In terms of biological role, with ARG81, ARG82 and MCM1, coordinates the expression of arginine anabolic and catabolic genes in response to arginine. The protein is Arginine metabolism regulation protein I (ARG80) of Saccharomyces cerevisiae (strain ATCC 204508 / S288c) (Baker's yeast).